We begin with the raw amino-acid sequence, 327 residues long: MAVPAKKRKMNFSEREVEIIVEELELKKHLLVNHFNAGVPLAAKSAAWHGILRRVNAVATCRRELPEVKKKWSDLKTEVRRKVAQVRAAVEGGEAPGPTEEDGAGGPGTGGGSGGGGPAVAPVLLTPMQQRICNLLGEATIISLPSTTEIHPVALGPSATAAAATVTLTQIPTETTYHTLEEGVVEYCTAEAPPPLPPETPVDMMAQHADTSVKPQALKSRIALNSAKLIQEQRVTNLHVKEIAQHLEQQNDLLQMIRRSQEVQACAQERQAQAMEGTQAALSVLIQVLRPMIKDFRRYLQSNTANPAPASDPGQVAQNGQPDSIIQ.

The segment at 1-70 is required for nuclear localization and apoptosis-inducing activity; sequence MAVPAKKRKM…CRRELPEVKK (70 aa). Low complexity predominate over residues 87–98; the sequence is RAAVEGGEAPGP. Disordered regions lie at residues 87–118 and 303–327; these read RAAV…GGGP and NTAN…SIIQ. Gly residues predominate over residues 104–118; the sequence is AGGPGTGGGSGGGGP. Positions 316–327 are enriched in polar residues; sequence VAQNGQPDSIIQ.

It belongs to the NAIF1 family. In terms of assembly, interacts with HARBI1. Widely expressed.

It is found in the nucleus. Its function is as follows. Induces apoptosis. The protein is Nuclear apoptosis-inducing factor 1 (NAIF1) of Homo sapiens (Human).